We begin with the raw amino-acid sequence, 224 residues long: LOB domain-containing protein 15 (224 aa).

The 102-residue stretch at 44-145 folds into the LOB domain; sequence TPCAACKLLR…AELTAVRSEI (102 aa). The tract at residues 171 to 224 is disordered; that stretch reads SGGVSVIAPPPQRPTTPPQPTTAHPPSPSSCVFSQPTTRDLEYGNIESENNYFG. The span at 178–198 shows a compositional bias: pro residues; sequence APPPQRPTTPPQPTTAHPPSP.

This sequence belongs to the LOB domain-containing protein family. In terms of tissue distribution, expressed in young shoots, roots, stems, leaves and flowers.

This chain is LOB domain-containing protein 15 (LBD15), found in Arabidopsis thaliana (Mouse-ear cress).